A 907-amino-acid chain; its full sequence is Leucine-rich repeat-containing G-protein coupled receptor 5 (907 aa).

Residues 1-21 form the signal peptide; that stretch reads MDTSRVRMLLSLLALLQLVAA. Over 22–561 the chain is Extracellular; the sequence is GSPPRPDTMP…EHLFGSWLIR (540 aa). The 32-residue stretch at 33-64 folds into the LRRNT domain; it reads GCPSYCHCELDGRMLLRVDCSDLGLSELPSNL. Intrachain disulfides connect Cys-34–Cys-40 and Cys-38–Cys-52. LRR repeat units follow at residues 44-64, 65-88, 89-112, 114-136, 137-160, 162-184, 186-208, 209-232, 233-256, 257-279, 281-303, 304-327, 328-350, 351-375, 377-396, 397-420, and 422-444; these read GRML…PSNL, SVFT…LLHR, LRFL…AFAG, HSLK…ALQN, LRSL…CFSG, HSLR…AFRS, SALQ…AFGN, LSSL…CFDG, LHSL…IKTL, SNLK…AFVG, PSLI…AFQH, LPEL…LTGT, ATLE…VCDQ, LPNL…GCQK, QKID…TFQQ, LFNL…AFST, and PSLI…GLHG. N-linked (GlcNAc...) asparagine glycans are attached at residues Asn-63 and Asn-77. The N-linked (GlcNAc...) asparagine glycan is linked to Asn-208. A disulfide bridge connects residues Cys-348 and Cys-373. Residues Cys-479 and Cys-541 are joined by a disulfide bond. Residues 562-582 form a helical membrane-spanning segment; the sequence is IGVWTTAVLALSCNALVAFTV. Residues 564-585 form an LRR 18 repeat; that stretch reads VWTTAVLALSCNALVAFTVFRT. Residues 583 to 595 lie on the Cytoplasmic side of the membrane; that stretch reads FRTPLYISSIKLL. Residues 596-616 form a helical membrane-spanning segment; it reads IGVIAVVDILMGVSSAILAVV. Over 617-638 the chain is Extracellular; that stretch reads DTFTFGSFAQHGAWWEGGIGCQ. Cys-637 and Cys-712 are joined by a disulfide. A helical transmembrane segment spans residues 639–659; it reads IVGFLSIFASESSVFLLTLAA. Residues 660 to 682 are Cytoplasmic-facing; it reads LERGFSVKCSSKFEMKAPLSSLK. Residues 683 to 703 form a helical membrane-spanning segment; sequence AIILLCVLLALTIATVPLLGG. The Extracellular segment spans residues 704-723; the sequence is SEYNASPLCLPLPFGEPSTT. A helical transmembrane segment spans residues 724–744; it reads GYMVALVLLNSLCFLIMTIAY. Residues 745–775 are Cytoplasmic-facing; that stretch reads TRLYCSLEKGELENLWDCSMVKHTALLLFTN. A helical membrane pass occupies residues 776–796; it reads CILYCPVAFLSFSSLLNLTFI. The Extracellular portion of the chain corresponds to 797-802; sequence SPEVIK. A helical transmembrane segment spans residues 803 to 823; the sequence is FILLVIVPLPACLNPLLYIVF. The Cytoplasmic segment spans residues 824 to 907; it reads NPHFKEDMGS…LSSVAFVPCL (84 aa).

The protein belongs to the G-protein coupled receptor 1 family. Identified in a complex composed of RNF43, LGR5 and RSPO1. Also interacts with other R-spondin ligands, including RSPO2, RSPO3 and RSPO4.

Its subcellular location is the cell membrane. The protein localises to the golgi apparatus. The protein resides in the trans-Golgi network membrane. Receptor for R-spondins that potentiates the canonical Wnt signaling pathway and acts as a stem cell marker of the intestinal epithelium and the hair follicle. Upon binding to R-spondins (RSPO1, RSPO2, RSPO3 or RSPO4), associates with phosphorylated LRP6 and frizzled receptors that are activated by extracellular Wnt receptors, triggering the canonical Wnt signaling pathway to increase expression of target genes. In contrast to classical G-protein coupled receptors, does not activate heterotrimeric G-proteins to transduce the signal. Involved in the development and/or maintenance of the adult intestinal stem cells during postembryonic development. In Rattus norvegicus (Rat), this protein is Leucine-rich repeat-containing G-protein coupled receptor 5 (Lgr5).